The following is a 222-amino-acid chain: MDINFSQNEARVIGCLLEKEVTTPDQYPLTLNALTTACNQKSNREPVMALDEATVLDTVELLKEKRLINDVSSFGSRVSKFQHRFCNTEFGSLKFTSQEFAAVCVMLLRGPQSAGEIRTRTNRLCTFSDVKEVEAMLDGLAEHAKGPYVVKLPRESGKRDCRYMHLFSGEVDVEALAAAVKSTSTAGLASANNERFAELEEDMKAMKLEIAELKELLESLTS.

It belongs to the UPF0502 family.

The protein is UPF0502 protein PBPRB0676 of Photobacterium profundum (strain SS9).